A 587-amino-acid chain; its full sequence is Beta-(1--&gt;2)glucan export ATP-binding/permease protein NdvA (587 aa).

The region spanning 21 to 301 (VSLVVVANIV…MRQFATQIFE (281 aa)) is the ABC transmembrane type-1 domain. Transmembrane regions (helical) follow at residues 23–43 (LVVVANIVLATITIAEPILFG), 57–77 (PILFMWATFAVFNTIAFVLVA), 128–148 (GLWLEFMRNHLSTVIALALLI), 158–178 (LSAVLMVLAIAYWLIGRVVMS), 248–268 (MASTIAMMVVLIIGTMLVQAG), and 272–292 (VGDVIAFIGFANLLIGRLDLM). One can recognise an ABC transporter domain in the interval 335–569 (IEFRDVSFGF…NGRFAALLRA (235 aa)). ATP is bound at residue 368–375 (GPTGAGKT).

It belongs to the ABC transporter superfamily. Beta-(1--&gt;2)glucan exporter (TC 3.A.1.108.1) family. In terms of assembly, homodimer.

The protein resides in the cell inner membrane. It catalyses the reaction [(1-&gt;2)-beta-D-glucosyl](n)(in) + ATP + H2O = [(1-&gt;2)-beta-D-glucosyl](n)(out) + ADP + phosphate + H(+). In terms of biological role, involved in beta-(1--&gt;2)glucan export. Transmembrane domains (TMD) form a pore in the inner membrane and the ATP-binding domain (NBD) is responsible for energy generation. The sequence is that of Beta-(1--&gt;2)glucan export ATP-binding/permease protein NdvA from Rhizobium johnstonii (strain DSM 114642 / LMG 32736 / 3841) (Rhizobium leguminosarum bv. viciae).